A 440-amino-acid chain; its full sequence is COP9 signalosome complex subunit 5 (440 aa).

An MPN domain is found at 71–218 (VLISKLSCEK…MGAFRTIESK (148 aa)). The Zn(2+) site is built by His164, His166, and Asp177. The JAMM motif motif lies at 164–177 (HSHPGYDCWLSNID). Over residues 319 to 341 (TQRGDSTETSSFGSMFSGDNTSD) the composition is skewed to polar residues. Disordered regions lie at residues 319-343 (TQRGDSTETSSFGSMFSGDNTSDVD) and 376-400 (SRSTDNFHNSKKRMNSNQEKCHDEG).

The protein belongs to the peptidase M67A family. CSN5 subfamily. As to quaternary structure, component of a COP9 signalosome-like (CSN) complex, composed of at least RRI1/CSN5, CSN9, RRI2/CSN10, PCI8/CSN11, CSN12 and CSI1. Within this complex it probably interacts directly with CSN12. Also interacts with RPN5. A divalent metal cation serves as cofactor.

It localises to the cytoplasm. It is found in the nucleus. In terms of biological role, catalytic component of the COP9 signalosome (CSN) complex that acts as an regulator of the ubiquitin (Ubl) conjugation pathway by mediating the deneddylation of the cullin subunit of SCF-type E3 ubiquitin-protein ligase complexes. The CSN complex is involved in the regulation of the mating pheromone response. The sequence is that of COP9 signalosome complex subunit 5 (RRI1) from Saccharomyces cerevisiae (strain YJM789) (Baker's yeast).